A 156-amino-acid polypeptide reads, in one-letter code: Transcription antitermination protein NusB (156 aa).

The protein belongs to the NusB family.

In terms of biological role, involved in transcription antitermination. Required for transcription of ribosomal RNA (rRNA) genes. Binds specifically to the boxA antiterminator sequence of the ribosomal RNA (rrn) operons. This Rickettsia conorii (strain ATCC VR-613 / Malish 7) protein is Transcription antitermination protein NusB.